Reading from the N-terminus, the 138-residue chain is Small ribosomal subunit protein uS12 (138 aa).

Asp89 is subject to 3-methylthioaspartic acid. Positions 101–138 are disordered; the sequence is ALDTAGTQNRNQGRSKYGTKRPKKGAATAAKGPVKGKK. Residues 105 to 114 are compositionally biased toward polar residues; it reads AGTQNRNQGR. A compositionally biased stretch (low complexity) spans 125–138; the sequence is GAATAAKGPVKGKK.

Belongs to the universal ribosomal protein uS12 family. As to quaternary structure, part of the 30S ribosomal subunit. Contacts proteins S8 and S17. May interact with IF1 in the 30S initiation complex.

In terms of biological role, with S4 and S5 plays an important role in translational accuracy. Interacts with and stabilizes bases of the 16S rRNA that are involved in tRNA selection in the A site and with the mRNA backbone. Located at the interface of the 30S and 50S subunits, it traverses the body of the 30S subunit contacting proteins on the other side and probably holding the rRNA structure together. The combined cluster of proteins S8, S12 and S17 appears to hold together the shoulder and platform of the 30S subunit. The protein is Small ribosomal subunit protein uS12 of Heliobacterium modesticaldum (strain ATCC 51547 / Ice1).